The chain runs to 89 residues: Small ribosomal subunit protein uS15 (89 aa).

Belongs to the universal ribosomal protein uS15 family. In terms of assembly, part of the 30S ribosomal subunit. Forms a bridge to the 50S subunit in the 70S ribosome, contacting the 23S rRNA.

In terms of biological role, one of the primary rRNA binding proteins, it binds directly to 16S rRNA where it helps nucleate assembly of the platform of the 30S subunit by binding and bridging several RNA helices of the 16S rRNA. Functionally, forms an intersubunit bridge (bridge B4) with the 23S rRNA of the 50S subunit in the ribosome. The protein is Small ribosomal subunit protein uS15 of Methylocella silvestris (strain DSM 15510 / CIP 108128 / LMG 27833 / NCIMB 13906 / BL2).